The chain runs to 459 residues: Cysteine--tRNA ligase (459 aa).

Position 28 (cysteine 28) interacts with Zn(2+). The 'HIGH' region signature appears at 30–40 (VTVYDLCHIGH). Residues cysteine 209, histidine 234, and glutamate 238 each coordinate Zn(2+). The 'KMSKS' region motif lies at 266–270 (KMSKS). Lysine 269 contributes to the ATP binding site.

It belongs to the class-I aminoacyl-tRNA synthetase family. In terms of assembly, monomer. It depends on Zn(2+) as a cofactor.

It is found in the cytoplasm. The enzyme catalyses tRNA(Cys) + L-cysteine + ATP = L-cysteinyl-tRNA(Cys) + AMP + diphosphate. The polypeptide is Cysteine--tRNA ligase (cysS) (Haemophilus influenzae (strain ATCC 51907 / DSM 11121 / KW20 / Rd)).